Here is an 845-residue protein sequence, read N- to C-terminus: Lon protease (845 aa).

Residues 45–242 (MPILALRNMI…RLLYLLHKEL (198 aa)) enclose the Lon N-terminal domain. 393-400 (GPPGVGKT) is an ATP binding site. Residues 629 to 811 (NGDAGVVIGL…NEVLKEALLE (183 aa)) form the Lon proteolytic domain. Active-site residues include Ser-717 and Lys-760.

This sequence belongs to the peptidase S16 family. Homohexamer. Organized in a ring with a central cavity.

The protein localises to the cytoplasm. The enzyme catalyses Hydrolysis of proteins in presence of ATP.. In terms of biological role, ATP-dependent serine protease that mediates the selective degradation of mutant and abnormal proteins as well as certain short-lived regulatory proteins. Required for cellular homeostasis and for survival from DNA damage and developmental changes induced by stress. Degrades polypeptides processively to yield small peptide fragments that are 5 to 10 amino acids long. Binds to DNA in a double-stranded, site-specific manner. In Porphyromonas gingivalis (strain ATCC 33277 / DSM 20709 / CIP 103683 / JCM 12257 / NCTC 11834 / 2561), this protein is Lon protease.